We begin with the raw amino-acid sequence, 280 residues long: Large ribosomal subunit protein uL2 (280 aa).

2 disordered regions span residues 1 to 59 and 223 to 280; these read MAIR…GGHK and GVVM…NKKR. Basic and acidic residues predominate over residues 23-33; that stretch reads ELTRSTPEKSL. 2 stretches are compositionally biased toward basic residues: residues 36 to 59 and 269 to 280; these read PLHKTGGRNVHGHITTRHKGGGHK and VRRRRSNKNKKR.

Belongs to the universal ribosomal protein uL2 family. In terms of assembly, part of the 50S ribosomal subunit. Forms a bridge to the 30S subunit in the 70S ribosome.

One of the primary rRNA binding proteins. Required for association of the 30S and 50S subunits to form the 70S ribosome, for tRNA binding and peptide bond formation. It has been suggested to have peptidyltransferase activity; this is somewhat controversial. Makes several contacts with the 16S rRNA in the 70S ribosome. The polypeptide is Large ribosomal subunit protein uL2 (Corynebacterium kroppenstedtii (strain DSM 44385 / JCM 11950 / CIP 105744 / CCUG 35717)).